We begin with the raw amino-acid sequence, 162 residues long: uncharacterized protein (162 aa).

Positions 1-21 (MRLCGLLIFLSYIVYVDNAVT) are cleaved as a signal peptide.

This is an uncharacterized protein from Caenorhabditis elegans.